The sequence spans 360 residues: Abhydrolase domain-containing protein lid-1 (360 aa).

Residues 73 to 203 (AIVFIPGLGA…MSFLGGVAGY (131 aa)) form the AB hydrolase-1 domain.

The protein belongs to the peptidase S33 family. ABHD4/ABHD5 subfamily. In terms of assembly, interacts with atgl-1.

It localises to the lipid droplet. Functionally, acts coordinately with atgl-1 within the lipolytic cascade to distribute stored energy to tissues during nutritional deprivation. The chain is Abhydrolase domain-containing protein lid-1 from Caenorhabditis elegans.